Here is a 544-residue protein sequence, read N- to C-terminus: Chaperonin GroEL (544 aa).

ATP is bound by residues 29–32, Lys50, 86–90, Gly415, and Asp495; these read TLGP and DGTTT.

Belongs to the chaperonin (HSP60) family. As to quaternary structure, forms a cylinder of 14 subunits composed of two heptameric rings stacked back-to-back. Interacts with the co-chaperonin GroES.

It is found in the cytoplasm. The enzyme catalyses ATP + H2O + a folded polypeptide = ADP + phosphate + an unfolded polypeptide.. Its function is as follows. Together with its co-chaperonin GroES, plays an essential role in assisting protein folding. The GroEL-GroES system forms a nano-cage that allows encapsulation of the non-native substrate proteins and provides a physical environment optimized to promote and accelerate protein folding. The polypeptide is Chaperonin GroEL (Tannerella forsythia (Bacteroides forsythus)).